The chain runs to 277 residues: Thymidylate synthase (277 aa).

DUMP-binding positions include arginine 27 and 132–133 (RR). Residue cysteine 152 is the Nucleophile of the active site. DUMP-binding positions include 179 to 182 (RSAD), asparagine 190, and 220 to 222 (HVY). Aspartate 182 contributes to the (6R)-5,10-methylene-5,6,7,8-tetrahydrofolate binding site. Alanine 276 lines the (6R)-5,10-methylene-5,6,7,8-tetrahydrofolate pocket.

Belongs to the thymidylate synthase family. Bacterial-type ThyA subfamily. In terms of assembly, homodimer.

It localises to the cytoplasm. It carries out the reaction dUMP + (6R)-5,10-methylene-5,6,7,8-tetrahydrofolate = 7,8-dihydrofolate + dTMP. The protein operates within pyrimidine metabolism; dTTP biosynthesis. Its function is as follows. Catalyzes the reductive methylation of 2'-deoxyuridine-5'-monophosphate (dUMP) to 2'-deoxythymidine-5'-monophosphate (dTMP) while utilizing 5,10-methylenetetrahydrofolate (mTHF) as the methyl donor and reductant in the reaction, yielding dihydrofolate (DHF) as a by-product. This enzymatic reaction provides an intracellular de novo source of dTMP, an essential precursor for DNA biosynthesis. This is Thymidylate synthase from Albidiferax ferrireducens (strain ATCC BAA-621 / DSM 15236 / T118) (Rhodoferax ferrireducens).